Consider the following 191-residue polypeptide: uncharacterized protein (191 aa).

The 98-residue stretch at 87 to 184 folds into the Fe2OG dioxygenase domain; it reads EFDSALIFHY…RIAITFRQMG (98 aa).

This is an uncharacterized protein from Acanthamoeba polyphaga mimivirus (APMV).